The following is a 363-amino-acid chain: Chorismate synthase (363 aa).

Positions 48 and 54 each coordinate NADP(+). FMN-binding positions include 125-127, 237-238, G277, 292-296, and R318; these read RSS, NA, and KPTSS.

This sequence belongs to the chorismate synthase family. In terms of assembly, homotetramer. Requires FMNH2 as cofactor.

The catalysed reaction is 5-O-(1-carboxyvinyl)-3-phosphoshikimate = chorismate + phosphate. Its pathway is metabolic intermediate biosynthesis; chorismate biosynthesis; chorismate from D-erythrose 4-phosphate and phosphoenolpyruvate: step 7/7. Catalyzes the anti-1,4-elimination of the C-3 phosphate and the C-6 proR hydrogen from 5-enolpyruvylshikimate-3-phosphate (EPSP) to yield chorismate, which is the branch point compound that serves as the starting substrate for the three terminal pathways of aromatic amino acid biosynthesis. This reaction introduces a second double bond into the aromatic ring system. This Pseudomonas putida (strain W619) protein is Chorismate synthase.